The sequence spans 310 residues: Protein-methionine-sulfoxide reductase catalytic subunit MsrP (310 aa).

A signal peptide (tat-type signal) is located at residues 1–45 (MRKTSSPRIAPSEITPRDLYHDRRRFMQAAAGAAAAALWPHWLSA). Residues Asn-73, 76–77 (YE), Cys-131, Thr-166, Asn-214, Arg-219, and 230–232 (SAK) contribute to the Mo-molybdopterin site.

The protein belongs to the MsrP family. In terms of assembly, heterodimer of a catalytic subunit (MsrP) and a heme-binding subunit (MsrQ). Requires Mo-molybdopterin as cofactor. In terms of processing, predicted to be exported by the Tat system. The position of the signal peptide cleavage has not been experimentally proven.

It is found in the periplasm. It catalyses the reaction L-methionyl-[protein] + a quinone + H2O = L-methionyl-(S)-S-oxide-[protein] + a quinol. The enzyme catalyses L-methionyl-[protein] + a quinone + H2O = L-methionyl-(R)-S-oxide-[protein] + a quinol. Part of the MsrPQ system that repairs oxidized periplasmic proteins containing methionine sulfoxide residues (Met-O), using respiratory chain electrons. Thus protects these proteins from oxidative-stress damage caused by reactive species of oxygen and chlorine generated by the host defense mechanisms. MsrPQ is essential for the maintenance of envelope integrity under bleach stress, rescuing a wide series of structurally unrelated periplasmic proteins from methionine oxidation. The catalytic subunit MsrP is non-stereospecific, being able to reduce both (R-) and (S-) diastereoisomers of methionine sulfoxide. In Methylococcus capsulatus (strain ATCC 33009 / NCIMB 11132 / Bath), this protein is Protein-methionine-sulfoxide reductase catalytic subunit MsrP.